A 423-amino-acid chain; its full sequence is Testin (423 aa).

Disordered stretches follow at residues 1–21 (MSATHPTRLGTRTKESNACAS) and 138–169 (EKQPVAGSEGAQYRKKQLAKQLPAHDQDPSKC). Residues 97–204 (MILTNPVAAK…GDVKFPSEMN (108 aa)) enclose the PET domain. Positions 160–169 (PAHDQDPSKC) are enriched in basic and acidic residues. LIM zinc-binding domains follow at residues 236–299 (YSCY…CDSE), 301–361 (PRCA…NHAV), and 364–423 (QGCH…RMMS).

This sequence belongs to the prickle / espinas / testin family. In terms of assembly, interacts via LIM domain 1 with ZYX. Interacts (via LIM domain 3) with ENAH and VASP. Interacts with ALKBH4, talin, actin, alpha-actinin, GRIP1 and PXN. Interacts (via LIM domain 2) with ACTL7A (via N-terminus). Heterodimer with ACTL7A; the heterodimer interacts with ENAH to form a heterotrimer. Detected at the acrosome of round spermatids (at protein level). Isoform TES1 transcript is highly expressed in adult testis and detected at low levels in other tissues. Isoform TES2 transcript is highly expressed in testis, kidney and spleen; intermediate in thymus, submaxillary gland and lung; detected at low levels in other tissues.

It is found in the cytoplasm. It localises to the cell junction. The protein localises to the focal adhesion. Functionally, scaffold protein that may play a role in cell adhesion, cell spreading and in the reorganization of the actin cytoskeleton. Plays a role in the regulation of cell proliferation. May act as a tumor suppressor. In Mus musculus (Mouse), this protein is Testin (Tes).